The sequence spans 135 residues: Mediator of RNA polymerase II transcription subunit 10 (135 aa).

The protein belongs to the Mediator complex subunit 10 family. In terms of assembly, component of the Mediator complex.

It localises to the nucleus. In terms of biological role, component of the Mediator complex, a coactivator involved in the regulated transcription of nearly all RNA polymerase II-dependent genes. Mediator functions as a bridge to convey information from gene-specific regulatory proteins to the basal RNA polymerase II transcription machinery. Mediator is recruited to promoters by direct interactions with regulatory proteins and serves as a scaffold for the assembly of a functional preinitiation complex with RNA polymerase II and the general transcription factors. This chain is Mediator of RNA polymerase II transcription subunit 10 (med10), found in Xenopus laevis (African clawed frog).